The primary structure comprises 309 residues: Taste receptor type 2 member 124 (309 aa).

At 1–7 (MVSVLHS) the chain is on the extracellular side. The chain crosses the membrane as a helical span at residues 8 to 28 (ISTIIIIAEFVWGNLSNGLIV). Residues 29-46 (LKNCLDWINIKELSTLDQ) are Cytoplasmic-facing. A helical membrane pass occupies residues 47-67 (ILILLAISRISLIWETLLMWV). Topologically, residues 68 to 81 (KDKLISSITIEELK) are extracellular. Residues 82 to 102 (MIMFSFMLSSHFSLWLATALS) form a helical membrane-spanning segment. Residues 103-127 (TFYLFRIANCSWQIFLYLKWRLKHL) are Cytoplasmic-facing. A helical membrane pass occupies residues 128 to 148 (IVQMLLGSVMFLIANIIQITI). Topologically, residues 149-182 (TLEKRFYQYKGNTSVNSIQNEFALLIEMMLFNMT) are extracellular. Residues Asn-160 and Asn-180 are each glycosylated (N-linked (GlcNAc...) asparagine). A helical transmembrane segment spans residues 183–203 (IFSVIPFLLALISFFLLIFSL). The Cytoplasmic segment spans residues 204–227 (WKHLQRMQLNSREDRDPSTKAHRN). Residues 228-248 (ALGIMVSFLLLYTMYVLSLLI) form a helical membrane-spanning segment. The Extracellular portion of the chain corresponds to 249–261 (SWIAQKNQSELVH). N-linked (GlcNAc...) asparagine glycosylation is present at Asn-255. Residues 262 to 282 (IICMITSLLNPSVHSSILILG) traverse the membrane as a helical segment. Residues 283 to 309 (NFKLKQSSLCILRHLGCRLKSQNTPTT) lie on the Cytoplasmic side of the membrane.

The protein belongs to the G-protein coupled receptor T2R family.

Its subcellular location is the membrane. Functionally, putative taste receptor which may play a role in the perception of bitterness. In Rattus norvegicus (Rat), this protein is Taste receptor type 2 member 124.